A 361-amino-acid polypeptide reads, in one-letter code: MTLMFTSRTAVYCSNLTTQRSAVTILRTLSGTASNGIKSRSALTAYQQNPSLRTRNFHSTSVVQAKDFFPEPDTPHIKKTKTAWPHPIYTVEQMNQVAVAHRDTRNWSDKVALIAVKLLRWGLDTVSGYKHGKAQALHAQDPQEAQKRYGMTGKQYLVRNVFLESVAGVPGMVAGMLRHLHSMRRMKRDHGWIETLLEESYNERMHLLIFLKLYEPGWFMRLAVLGAQGVFFNAMFLSYLISPRTCHRFVGYLEEEAVVTYTRELADLEAGKLPEWETLAAPDIAVDYYNLPEGHRTMKDLLLHVRADEAKHREVNHTLGNLDQNSDPNPYASKYDNPNVPHPRKDIKYLKPSGWEREEVM.

The chain crosses the membrane as a helical span at residues 156 to 178 (YLVRNVFLESVAGVPGMVAGMLR). Fe cation is bound by residues Glu164, Glu203, and His206. The helical transmembrane segment at 218–240 (WFMRLAVLGAQGVFFNAMFLSYL) threads the bilayer. Fe cation-binding residues include Glu254, Glu309, and His312. Over residues 318 to 328 (TLGNLDQNSDP) the composition is skewed to polar residues. The segment at 318–361 (TLGNLDQNSDPNPYASKYDNPNVPHPRKDIKYLKPSGWEREEVM) is disordered. Residues 343 to 361 (PRKDIKYLKPSGWEREEVM) are compositionally biased toward basic and acidic residues.

The protein belongs to the alternative oxidase family. It depends on Fe cation as a cofactor.

It is found in the mitochondrion inner membrane. Its function is as follows. Catalyzes cyanide-resistant oxygen consumption. May increase respiration when the cytochrome respiratory pathway is restricted, or in response to low temperatures. The protein is Alternative oxidase, mitochondrial (AOX1) of Venturia inaequalis (Apple scab fungus).